We begin with the raw amino-acid sequence, 299 residues long: ATP phosphoribosyltransferase (299 aa).

The protein belongs to the ATP phosphoribosyltransferase family. Long subfamily. Equilibrium between an active dimeric form, an inactive hexameric form and higher aggregates. Interconversion between the various forms is largely reversible and is influenced by the natural substrates and inhibitors of the enzyme. Mg(2+) serves as cofactor.

It is found in the cytoplasm. The catalysed reaction is 1-(5-phospho-beta-D-ribosyl)-ATP + diphosphate = 5-phospho-alpha-D-ribose 1-diphosphate + ATP. It functions in the pathway amino-acid biosynthesis; L-histidine biosynthesis; L-histidine from 5-phospho-alpha-D-ribose 1-diphosphate: step 1/9. Feedback inhibited by histidine. Catalyzes the condensation of ATP and 5-phosphoribose 1-diphosphate to form N'-(5'-phosphoribosyl)-ATP (PR-ATP). Has a crucial role in the pathway because the rate of histidine biosynthesis seems to be controlled primarily by regulation of HisG enzymatic activity. In Serratia proteamaculans (strain 568), this protein is ATP phosphoribosyltransferase.